The chain runs to 436 residues: Ribulose bisphosphate carboxylase large chain (436 aa).

Asn-104 and Thr-154 together coordinate substrate. Lys-156 serves as the catalytic Proton acceptor. Residue Lys-158 participates in substrate binding. Positions 182, 184, and 185 each coordinate Mg(2+). Residue Lys-182 is modified to N6-carboxylysine. The Proton acceptor role is filled by His-275. Positions 276, 308, and 360 each coordinate substrate.

The protein belongs to the RuBisCO large chain family. Type I subfamily. As to quaternary structure, heterohexadecamer of 8 large chains and 8 small chains; disulfide-linked. The disulfide link is formed within the large subunit homodimers. It depends on Mg(2+) as a cofactor. The disulfide bond which can form in the large chain dimeric partners within the hexadecamer appears to be associated with oxidative stress and protein turnover.

The protein resides in the plastid. It localises to the chloroplast. It carries out the reaction 2 (2R)-3-phosphoglycerate + 2 H(+) = D-ribulose 1,5-bisphosphate + CO2 + H2O. The catalysed reaction is D-ribulose 1,5-bisphosphate + O2 = 2-phosphoglycolate + (2R)-3-phosphoglycerate + 2 H(+). Functionally, ruBisCO catalyzes two reactions: the carboxylation of D-ribulose 1,5-bisphosphate, the primary event in carbon dioxide fixation, as well as the oxidative fragmentation of the pentose substrate in the photorespiration process. Both reactions occur simultaneously and in competition at the same active site. The protein is Ribulose bisphosphate carboxylase large chain of Euglena anabaena (Euglenaria anabaena).